Consider the following 466-residue polypeptide: 3-isopropylmalate dehydratase large subunit (466 aa).

Residues C347, C407, and C410 each coordinate [4Fe-4S] cluster.

Belongs to the aconitase/IPM isomerase family. LeuC type 1 subfamily. Heterodimer of LeuC and LeuD. The cofactor is [4Fe-4S] cluster.

The catalysed reaction is (2R,3S)-3-isopropylmalate = (2S)-2-isopropylmalate. Its pathway is amino-acid biosynthesis; L-leucine biosynthesis; L-leucine from 3-methyl-2-oxobutanoate: step 2/4. Its function is as follows. Catalyzes the isomerization between 2-isopropylmalate and 3-isopropylmalate, via the formation of 2-isopropylmaleate. This Shewanella loihica (strain ATCC BAA-1088 / PV-4) protein is 3-isopropylmalate dehydratase large subunit.